A 443-amino-acid chain; its full sequence is Tubulin beta-2 chain (443 aa).

Residues 1–4 carry the MREI motif motif; sequence MREI. Positions 11, 69, 138, 142, 143, 144, 204, and 226 each coordinate GTP. E69 contributes to the Mg(2+) binding site. E438 carries the post-translational modification 5-glutamyl polyglutamate.

The protein belongs to the tubulin family. As to quaternary structure, dimer of alpha and beta chains. A typical microtubule is a hollow water-filled tube with an outer diameter of 25 nm and an inner diameter of 15 nM. Alpha-beta heterodimers associate head-to-tail to form protofilaments running lengthwise along the microtubule wall with the beta-tubulin subunit facing the microtubule plus end conferring a structural polarity. Microtubules usually have 13 protofilaments but different protofilament numbers can be found in some organisms and specialized cells. Mg(2+) serves as cofactor. Post-translationally, some glutamate residues at the C-terminus are polyglycylated, resulting in polyglycine chains on the gamma-carboxyl group. Glycylation is mainly limited to tubulin incorporated into axonemes (cilia and flagella) whereas glutamylation is prevalent in neuronal cells, centrioles, axonemes, and the mitotic spindle. Both modifications can coexist on the same protein on adjacent residues, and lowering polyglycylation levels increases polyglutamylation, and reciprocally. The precise function of polyglycylation is still unclear. In terms of processing, some glutamate residues at the C-terminus are polyglutamylated, resulting in polyglutamate chains on the gamma-carboxyl group. Polyglutamylation plays a key role in microtubule severing by spastin (SPAST). SPAST preferentially recognizes and acts on microtubules decorated with short polyglutamate tails: severing activity by SPAST increases as the number of glutamates per tubulin rises from one to eight, but decreases beyond this glutamylation threshold. Nervous system specific.

It is found in the cytoplasm. It localises to the cytoskeleton. In terms of biological role, tubulin is the major constituent of microtubules, a cylinder consisting of laterally associated linear protofilaments composed of alpha- and beta-tubulin heterodimers. Microtubules grow by the addition of GTP-tubulin dimers to the microtubule end, where a stabilizing cap forms. Below the cap, tubulin dimers are in GDP-bound state, owing to GTPase activity of alpha-tubulin. This chain is Tubulin beta-2 chain (tubb2), found in Xenopus laevis (African clawed frog).